We begin with the raw amino-acid sequence, 130 residues long: Small ribosomal subunit protein eS6 (130 aa).

The protein belongs to the eukaryotic ribosomal protein eS6 family.

This chain is Small ribosomal subunit protein eS6, found in Methanosphaera stadtmanae (strain ATCC 43021 / DSM 3091 / JCM 11832 / MCB-3).